Here is a 264-residue protein sequence, read N- to C-terminus: ATP synthase subunit a (264 aa).

The next 5 membrane-spanning stretches (helical) occupy residues 39 to 59 (LDTL…FYII), 97 to 117 (VAPL…MDLV), 139 to 159 (TADP…VVFY), 205 to 225 (LFGN…LPWW), and 239 to 259 (LLVI…YISL).

The protein belongs to the ATPase A chain family. As to quaternary structure, F-type ATPases have 2 components, CF(1) - the catalytic core - and CF(0) - the membrane proton channel. CF(1) has five subunits: alpha(3), beta(3), gamma(1), delta(1), epsilon(1). CF(0) has three main subunits: a(1), b(2) and c(9-12). The alpha and beta chains form an alternating ring which encloses part of the gamma chain. CF(1) is attached to CF(0) by a central stalk formed by the gamma and epsilon chains, while a peripheral stalk is formed by the delta and b chains.

It localises to the cell inner membrane. Key component of the proton channel; it plays a direct role in the translocation of protons across the membrane. This chain is ATP synthase subunit a, found in Coxiella burnetii (strain CbuG_Q212) (Coxiella burnetii (strain Q212)).